A 280-amino-acid polypeptide reads, in one-letter code: MTIKSVSVKGIDVANEQPFVLFGGMNVLESRDLAMKIAEHYVEVTQKLGIPYVFKASFDKANRSSVNSYRGPGLDEGLKIFEEIKSTFNVPIITDVHESYQAQPVSEVVDVIQLPAFLARQTDLVVAMAKTGAVINVKKPQFLAAHEMKHIITKFGEAGNENIILCERGSCYGYNNLVVDMLAMDEMKNYAPVIFDATHALQKPGGRSDSADGRRAQAAQLARSGMAIGIAGLFIEAHPDPSAAKCDGPCALPLDKLEPYLAQMKALDDLVKGFTPLITD.

The protein belongs to the KdsA family.

The protein resides in the cytoplasm. It carries out the reaction D-arabinose 5-phosphate + phosphoenolpyruvate + H2O = 3-deoxy-alpha-D-manno-2-octulosonate-8-phosphate + phosphate. The protein operates within carbohydrate biosynthesis; 3-deoxy-D-manno-octulosonate biosynthesis; 3-deoxy-D-manno-octulosonate from D-ribulose 5-phosphate: step 2/3. It functions in the pathway bacterial outer membrane biogenesis; lipopolysaccharide biosynthesis. The protein is 2-dehydro-3-deoxyphosphooctonate aldolase of Colwellia psychrerythraea (strain 34H / ATCC BAA-681) (Vibrio psychroerythus).